Here is a 253-residue protein sequence, read N- to C-terminus: Protein phosphatase CheZ (253 aa).

Positions 1 to 84 (MTQEELDALM…EWPPPPPTEE (84 aa)) are disordered. Basic and acidic residues predominate over residues 21 to 69 (LETKEETKEEAKEEAKEEAKEEAKEKEEIKEESSSQKMTVKKEDAEKYG).

The protein belongs to the CheZ family. In terms of assembly, interacts with ChePep; this interaction is essential for each other polar localization.

It is found in the cytoplasm. Functionally, plays an important role in bacterial chemotaxis signal transduction pathway by accelerating the dephosphorylation of phosphorylated CheY (CheY-P). Also dephosphorylates CheV2 but not CheV1 or CheV3. In addition, forms a distinct chemotaxis regulatory complex with ChePep independently of the core chemotaxis signaling proteins. This Helicobacter pylori (strain ATCC 700392 / 26695) (Campylobacter pylori) protein is Protein phosphatase CheZ.